The following is a 272-amino-acid chain: Ribosomal RNA small subunit methyltransferase A (272 aa).

S-adenosyl-L-methionine is bound by residues Asn-16, Leu-18, Gly-43, Glu-64, Asp-89, and Asn-110.

This sequence belongs to the class I-like SAM-binding methyltransferase superfamily. rRNA adenine N(6)-methyltransferase family. RsmA subfamily.

The protein localises to the cytoplasm. It carries out the reaction adenosine(1518)/adenosine(1519) in 16S rRNA + 4 S-adenosyl-L-methionine = N(6)-dimethyladenosine(1518)/N(6)-dimethyladenosine(1519) in 16S rRNA + 4 S-adenosyl-L-homocysteine + 4 H(+). Functionally, specifically dimethylates two adjacent adenosines (A1518 and A1519) in the loop of a conserved hairpin near the 3'-end of 16S rRNA in the 30S particle. May play a critical role in biogenesis of 30S subunits. The sequence is that of Ribosomal RNA small subunit methyltransferase A from Pseudomonas fluorescens (strain Pf0-1).